The primary structure comprises 257 residues: MPRLKFTLAYVGTAYHGWQTQRRKSLPELPTIQSTLEKVIASIIGKPVRVCGAGRTDAGVHAEGQVAHVDIPESKLKLDWQLVLNASLPKNIRVVHSLYVEDTFHAQHDAVQKLYAYRLWLNHRYTPPVLYPFVWSCGRLDLEAMDKASTFLLGTHNFVSLQNRGTKLLSTVRTISALYREPSQFFSLNESHEVTWFFKADGFLKQMVRNIMGLLVLVGRRKIQPEKIPYILEAKDRRHSAPTAPAHGLTLKKVFYS.

D57 serves as the catalytic Nucleophile. Residue Y115 coordinates substrate.

This sequence belongs to the tRNA pseudouridine synthase TruA family. As to quaternary structure, homodimer.

The catalysed reaction is uridine(38/39/40) in tRNA = pseudouridine(38/39/40) in tRNA. In terms of biological role, formation of pseudouridine at positions 38, 39 and 40 in the anticodon stem and loop of transfer RNAs. In Lawsonia intracellularis (strain PHE/MN1-00), this protein is tRNA pseudouridine synthase A.